The chain runs to 583 residues: MENIIWQCLLYLSLLTALAWPLGKYIGKVMDGEPFWLQRALAPCERALYRLMGVDPAEQMGWKCYMACVIAFSAVSLVALTALLMAQHLLPLNPRNVSGASWHLALNTAISFVTNTNWQSYAGESTMSYLSQMAGLTVQNFVSAAVGIAVLFALIRGVRASGGIGLGNFWADATRAVLYILLPLSLVMSLLLIEQGVPQNFTDYRAAALLEPLAAEDGAPITHQLVPMGPQASQVSPKQLGTNGGGFNGVNSAHPHENPTPASNMLEMLALLLIPAALCFTFGAKIGDMRQGVAIFAAMFILLTSAVSFTVQAELNATPQIAQGGQVLVAPQSGLQGQAGGNMEGKETRFGIAGSALWASATTAVSNGSVNAMHDSFTPLGGMIPMVLMQLGEVIFGGVGSGLYGMLAFVLLTVFLAGLMVGRTPEYLGKKIEPFEMKMAVVVCLTTPVVILAGGGLMCLAPQIVDSLNNPLPHGFSEILYAATSAGANNGSAFAGLNANTPFLNVLLGVLMLAGRFAPIAAILAMADGLAGKKICPPGAGTLSTCNGLFIFLLIFVILLVGALSFFPALALGPLAEHLQMTR.

10 helical membrane-spanning segments follow: residues 3–23 (NIIWQCLLYLSLLTALAWPLG), 66–86 (MACVIAFSAVSLVALTALLMA), 135–155 (GLTVQNFVSAAVGIAVLFALI), 177–197 (VLYILLPLSLVMSLLLIEQGV), 266–286 (LEMLALLLIPAALCFTFGAKI), 293–313 (VAIFAAMFILLTSAVSFTVQA), 402–422 (GLYGMLAFVLLTVFLAGLMVG), 440–460 (AVVVCLTTPVVILAGGGLMCL), 506–526 (VLLGVLMLAGRFAPIAAILAM), and 549–569 (LFIFLLIFVILLVGALSFFPA).

Belongs to the KdpA family. In terms of assembly, the system is composed of three essential subunits: KdpA, KdpB and KdpC.

It is found in the cell inner membrane. Functionally, part of the high-affinity ATP-driven potassium transport (or Kdp) system, which catalyzes the hydrolysis of ATP coupled with the electrogenic transport of potassium into the cytoplasm. This subunit binds the periplasmic potassium ions and delivers the ions to the membrane domain of KdpB through an intramembrane tunnel. The sequence is that of Potassium-transporting ATPase potassium-binding subunit from Desulfovibrio desulfuricans (strain ATCC 27774 / DSM 6949 / MB).